The chain runs to 607 residues: Serine/threonine-protein kinase sid2 (607 aa).

Phosphoserine is present on residues serine 56, serine 60, serine 65, and serine 86. The span at 93–108 shows a compositional bias: basic and acidic residues; that stretch reads DRSGELSYKDNNHWSD. Residues 93-118 are disordered; that stretch reads DRSGELSYKDNNHWSDRSSTGSPRWE. Positions 109 to 118 are enriched in polar residues; it reads RSSTGSPRWE. One can recognise a Protein kinase domain in the interval 208–508; the sequence is FQTITQVGQG…LKQVMQHPYF (301 aa). ATP-binding positions include 214 to 222 and lysine 237; that span reads VGQGGYGSV. Phosphotyrosine is present on tyrosine 219. Aspartate 331 functions as the Proton acceptor in the catalytic mechanism. Position 402 is a phosphoserine (serine 402). An AGC-kinase C-terminal domain is found at 509-589; it reads SKIDWKNVRT…RHQKNSHPTS (81 aa). Residues 586–607 are disordered; it reads HPTSSSSALSSPLSAPSFGTLL. Residues 589–607 show a composition bias toward low complexity; sequence SSSSALSSPLSAPSFGTLL.

This sequence belongs to the protein kinase superfamily. Ser/Thr protein kinase family. Interacts with mob1 and cdc11.

The protein resides in the cytoplasm. The protein localises to the cytoskeleton. It localises to the microtubule organizing center. Its subcellular location is the spindle pole body. It catalyses the reaction L-seryl-[protein] + ATP = O-phospho-L-seryl-[protein] + ADP + H(+). The enzyme catalyses L-threonyl-[protein] + ATP = O-phospho-L-threonyl-[protein] + ADP + H(+). Functionally, part of a signaling pathway. Required for initiation of medial ring constriction and septation. This is Serine/threonine-protein kinase sid2 (sid2) from Schizosaccharomyces pombe (strain 972 / ATCC 24843) (Fission yeast).